The chain runs to 298 residues: Bifunctional protein FolD (298 aa).

Residues 166–168, Ser-191, and Ile-232 each bind NADP(+); that span reads GRS.

The protein belongs to the tetrahydrofolate dehydrogenase/cyclohydrolase family. As to quaternary structure, homodimer.

It catalyses the reaction (6R)-5,10-methylene-5,6,7,8-tetrahydrofolate + NADP(+) = (6R)-5,10-methenyltetrahydrofolate + NADPH. The catalysed reaction is (6R)-5,10-methenyltetrahydrofolate + H2O = (6R)-10-formyltetrahydrofolate + H(+). Its pathway is one-carbon metabolism; tetrahydrofolate interconversion. Catalyzes the oxidation of 5,10-methylenetetrahydrofolate to 5,10-methenyltetrahydrofolate and then the hydrolysis of 5,10-methenyltetrahydrofolate to 10-formyltetrahydrofolate. The chain is Bifunctional protein FolD from Parvibaculum lavamentivorans (strain DS-1 / DSM 13023 / NCIMB 13966).